The primary structure comprises 288 residues: Diaminopimelate epimerase (288 aa).

Substrate-binding residues include Asn14 and Asn67. The active-site Proton donor is the Cys76. Substrate-binding positions include 77 to 78, Asn166, Asn199, and 217 to 218; these read GN and ER. The active-site Proton acceptor is Cys226. 227-228 contacts substrate; that stretch reads GT.

This sequence belongs to the diaminopimelate epimerase family. Homodimer.

The protein localises to the cytoplasm. The enzyme catalyses (2S,6S)-2,6-diaminopimelate = meso-2,6-diaminopimelate. It participates in amino-acid biosynthesis; L-lysine biosynthesis via DAP pathway; DL-2,6-diaminopimelate from LL-2,6-diaminopimelate: step 1/1. Its function is as follows. Catalyzes the stereoinversion of LL-2,6-diaminopimelate (L,L-DAP) to meso-diaminopimelate (meso-DAP), a precursor of L-lysine and an essential component of the bacterial peptidoglycan. The polypeptide is Diaminopimelate epimerase (Bacillus cereus (strain B4264)).